Consider the following 132-residue polypeptide: Translation initiation factor 5A (132 aa).

Position 36 is a hypusine (Lys36).

It belongs to the eIF-5A family.

Its subcellular location is the cytoplasm. Functionally, functions by promoting the formation of the first peptide bond. This Caldivirga maquilingensis (strain ATCC 700844 / DSM 13496 / JCM 10307 / IC-167) protein is Translation initiation factor 5A (eIF5A).